The chain runs to 277 residues: MESAVDRHVFYISDGTAITAEVLGHAVMSQFPVAISSVTLPFVENISRARAVKEQIDAICQQTGIRPLVFYSIVIPEIRDIILQSEGFCQDIVQALVAPLQQELNLDPTPVAHRTHGLNPGNLIKYDARIAAIDYTLAHDDGISLRNLDQAQVILLGVSRCGKTPTSLYLAMQYGIRAANYPFIADDMDNLVLPASLKPLQHKMFGLTINPERLAAIREERRENSRYASLRQCRMEVTEVEALYRKNKIPCLNSTNYSVEEIATKIMDIMGLNRRMY.

An ADP-binding site is contributed by 157–164 (GVSRCGKT).

It belongs to the pyruvate, phosphate/water dikinase regulatory protein family. PSRP subfamily.

The catalysed reaction is [pyruvate, water dikinase] + ADP = [pyruvate, water dikinase]-phosphate + AMP + H(+). It carries out the reaction [pyruvate, water dikinase]-phosphate + phosphate + H(+) = [pyruvate, water dikinase] + diphosphate. Bifunctional serine/threonine kinase and phosphorylase involved in the regulation of the phosphoenolpyruvate synthase (PEPS) by catalyzing its phosphorylation/dephosphorylation. In Klebsiella pneumoniae subsp. pneumoniae (strain ATCC 700721 / MGH 78578), this protein is Putative phosphoenolpyruvate synthase regulatory protein.